A 504-amino-acid chain; its full sequence is Arabinose import ATP-binding protein AraG (504 aa).

2 consecutive ABC transporter domains span residues 8–243 (LSFR…MVGR) and 256–499 (YGEE…MPKV). 40–47 (GENGAGKS) contributes to the ATP binding site.

This sequence belongs to the ABC transporter superfamily. Arabinose importer (TC 3.A.1.2.2) family. The complex is composed of two ATP-binding proteins (AraG), two transmembrane proteins (AraH) and a solute-binding protein (AraF).

It localises to the cell inner membrane. It catalyses the reaction L-arabinose(out) + ATP + H2O = L-arabinose(in) + ADP + phosphate + H(+). Part of the ABC transporter complex AraFGH involved in arabinose import. Responsible for energy coupling to the transport system. This chain is Arabinose import ATP-binding protein AraG, found in Escherichia coli O157:H7.